The following is a 63-amino-acid chain: Large ribosomal subunit protein bL28 (63 aa).

The protein belongs to the bacterial ribosomal protein bL28 family.

This chain is Large ribosomal subunit protein bL28, found in Desulfosudis oleivorans (strain DSM 6200 / JCM 39069 / Hxd3) (Desulfococcus oleovorans).